The primary structure comprises 357 residues: Anthranilate phosphoribosyltransferase (357 aa).

Residues glycine 91, glycine 94–aspartate 95, threonine 99, asparagine 101–threonine 104, lysine 119–serine 127, and serine 131 contribute to the 5-phospho-alpha-D-ribose 1-diphosphate site. Residue glycine 91 participates in anthranilate binding. Position 103 (serine 103) interacts with Mg(2+). Asparagine 122 contributes to the anthranilate binding site. Anthranilate is bound at residue arginine 177. Positions 235 and 236 each coordinate Mg(2+).

This sequence belongs to the anthranilate phosphoribosyltransferase family. As to quaternary structure, homodimer. Mg(2+) is required as a cofactor.

The catalysed reaction is N-(5-phospho-beta-D-ribosyl)anthranilate + diphosphate = 5-phospho-alpha-D-ribose 1-diphosphate + anthranilate. It functions in the pathway amino-acid biosynthesis; L-tryptophan biosynthesis; L-tryptophan from chorismate: step 2/5. In terms of biological role, catalyzes the transfer of the phosphoribosyl group of 5-phosphorylribose-1-pyrophosphate (PRPP) to anthranilate to yield N-(5'-phosphoribosyl)-anthranilate (PRA). This Shewanella baltica (strain OS195) protein is Anthranilate phosphoribosyltransferase.